We begin with the raw amino-acid sequence, 254 residues long: Trans-aconitate 2-methyltransferase (254 aa).

It belongs to the methyltransferase superfamily. Tam family.

The protein resides in the cytoplasm. It catalyses the reaction trans-aconitate + S-adenosyl-L-methionine = (E)-3-(methoxycarbonyl)pent-2-enedioate + S-adenosyl-L-homocysteine. Catalyzes the S-adenosylmethionine monomethyl esterification of trans-aconitate. In Mycobacterium sp. (strain JLS), this protein is Trans-aconitate 2-methyltransferase.